We begin with the raw amino-acid sequence, 473 residues long: H(+)/Cl(-) exchange transporter ClcA (473 aa).

The Cytoplasmic portion of the chain corresponds to 1-32; sequence MKTDTPSLETPQAARLRRRQLIRQLLERDKTP. Residues 33 to 69 form a helical membrane-spanning segment; sequence LAILFMAAVVGTLVGLAAVAFDKGVAWLQNQRMGALV. Over 70-76 the chain is Periplasmic; that stretch reads HTADNYP. The helical transmembrane segment at 77–100 threads the bilayer; sequence LLLTVAFLCSAVLAMFGYFLVRKY. The Selectivity filter part_1 motif lies at 106-110; the sequence is GSGIP. Ser107 is a chloride binding site. The helical intramembrane region spans 109-116; the sequence is IPEIEGAL. Residues 117–123 are Cytoplasmic-facing; that stretch reads EDQRPVR. A run of 2 helical transmembrane segments spans residues 124–141 and 148–166; these read WWRVLPVKFFGGLGTLGG and EGPTVQIGGNIGRMVLDIF. Positions 146-150 match the Selectivity filter part_2 motif; that stretch reads GREGP. Residues 167–176 lie on the Cytoplasmic side of the membrane; it reads RLKGDEARHT. Intramembrane regions (helical) lie at residues 177–189 and 193–201; these read LLATGAAAGLAAA and PLAGILFII. Topologically, residues 202–214 are cytoplasmic; it reads EEMRPQFRYTLIS. A helical transmembrane segment spans residues 215–232; sequence IKAVFIGVIMSTIMYRIF. Residues 233–252 lie on the Periplasmic side of the membrane; it reads NHEVALIDVGKLSDAPLNTQ. The chain crosses the membrane as a helical span at residues 253-281; that stretch reads WLYLILGIIFGIFGPIFNKWVLGMQDLLH. Residues 282–287 lie on the Cytoplasmic side of the membrane; that stretch reads RVHGGN. Residues 288–309 traverse the membrane as a helical segment; that stretch reads ITKWVLMGGAIGGLCGLLGFVA. The Periplasmic portion of the chain corresponds to 310 to 329; the sequence is PATSGGGFNLIPIATAGNFS. 2 consecutive transmembrane segments (helical) span residues 330 to 349 and 355 to 376; these read MGMLVFIFVARVITTLLCFS and GIFAPMLALGTVLGTAFGMVVV. The Selectivity filter part_3 signature appears at 355 to 359; that stretch reads GIFAP. Residues Ile356 and Phe357 each coordinate chloride. Over 377-386 the chain is Periplasmic; sequence ELFPQYHLEA. The helical intramembrane region spans 387–401; the sequence is GTFAIAGMGALLAAS. Residues 402 to 404 constitute an intramembrane region (note=Loop between two helices); that stretch reads IRA. Positions 405-416 form an intramembrane region, helical; that stretch reads PLTGIILVLEMT. Positions 417–421 form an intramembrane region, note=Loop between two helices; that stretch reads DNYQL. Residues 422–438 traverse the membrane as a helical segment; it reads ILPMIITGLGATLLAQF. The Cytoplasmic segment spans residues 439–473; the sequence is TGGKPLYSAILARTLAKQEAEQLARSKAASASENT. Residue Tyr445 coordinates chloride.

This sequence belongs to the chloride channel (TC 2.A.49) family. ClcA subfamily. In terms of assembly, homodimer.

Its subcellular location is the cell inner membrane. The catalysed reaction is 2 chloride(in) + H(+)(out) = 2 chloride(out) + H(+)(in). Proton-coupled chloride transporter. Functions as antiport system and exchanges two chloride ions for 1 proton. Probably acts as an electrical shunt for an outwardly-directed proton pump that is linked to amino acid decarboxylation, as part of the extreme acid resistance (XAR) response. This Shigella boydii serotype 18 (strain CDC 3083-94 / BS512) protein is H(+)/Cl(-) exchange transporter ClcA.